The chain runs to 1187 residues: uncharacterized protein (1187 aa).

The segment covering 38-57 (KNNQDIPTSNTNISPKPISQ) has biased composition (polar residues). Disordered stretches follow at residues 38–127 (KNNQ…NSPT), 189–215 (ISRS…IHLN), 248–287 (TQPP…SQLQ), 358–415 (NNNS…NSNS), 443–490 (FPNN…INNN), 536–689 (QFPF…SSLN), 752–840 (SINN…NKSI), and 1079–1187 (HNNN…NLQK). 4 stretches are compositionally biased toward low complexity: residues 71 to 84 (KPIV…STLI), 104 to 124 (PSSS…SIPN), 190 to 215 (SRSS…IHLN), and 248 to 274 (TQPP…QAPH). Over residues 443 to 455 (FPNNTDENYPSDH) the composition is skewed to polar residues. 6 stretches are compositionally biased toward low complexity: residues 458 to 490 (NDNN…INNN), 543 to 570 (TTES…SSSA), 585 to 653 (INNL…SNIN), 662 to 689 (PNSP…SSLN), 752 to 790 (SINN…TTNN), and 797 to 809 (NYKI…NIDN). Residues 815–832 (NDDDNDDDDDDDVDDNDD) show a composition bias toward acidic residues. 2 stretches are compositionally biased toward low complexity: residues 1079 to 1149 (HNNN…PSNN) and 1156 to 1174 (KNNN…NNTN).

This is an uncharacterized protein from Dictyostelium discoideum (Social amoeba).